Consider the following 291-residue polypeptide: Proteasome subunit beta (291 aa).

Positions 1 to 57 are cleaved as a propeptide — removed in mature form; by autocatalysis; the sequence is MTWPLPDRLSINSLSGTPAVDLSSFTDFLRRQAPELLPASISGGAPLAGGDAQLPHG. The active-site Nucleophile is the Thr-58.

The protein belongs to the peptidase T1B family. In terms of assembly, the 20S proteasome core is composed of 14 alpha and 14 beta subunits that assemble into four stacked heptameric rings, resulting in a barrel-shaped structure. The two inner rings, each composed of seven catalytic beta subunits, are sandwiched by two outer rings, each composed of seven alpha subunits. The catalytic chamber with the active sites is on the inside of the barrel. Has a gated structure, the ends of the cylinder being occluded by the N-termini of the alpha-subunits. Is capped by the proteasome-associated ATPase, ARC.

The protein resides in the cytoplasm. It carries out the reaction Cleavage of peptide bonds with very broad specificity.. Its pathway is protein degradation; proteasomal Pup-dependent pathway. Its activity is regulated as follows. The formation of the proteasomal ATPase ARC-20S proteasome complex, likely via the docking of the C-termini of ARC into the intersubunit pockets in the alpha-rings, may trigger opening of the gate for substrate entry. Interconversion between the open-gate and close-gate conformations leads to a dynamic regulation of the 20S proteasome proteolysis activity. Its function is as follows. Component of the proteasome core, a large protease complex with broad specificity involved in protein degradation. The polypeptide is Proteasome subunit beta (Mycobacterium tuberculosis (strain ATCC 25177 / H37Ra)).